The following is a 911-amino-acid chain: DNA replication licensing factor mcm4 (911 aa).

The segment at 1-132 (MSSSQQSGRA…RPGVSTPSSL (132 aa)) is disordered. Ser37, Ser38, and Ser41 each carry phosphoserine. Residues 42–56 (TRLTTPRTTARTPLA) show a composition bias toward low complexity. Over residues 63–84 (ESSSPGPNIPQSSRSHLLSQRN) the composition is skewed to polar residues. Position 92 is a phosphoserine (Ser92). Residues 493 to 702 (IYDILSRSLA…LDRKLANHIV (210 aa)) form the MCM domain. 545–552 (GDPSTSKS) contacts ATP. The Arginine finger signature appears at 677-680 (SRFD).

It belongs to the MCM family. In terms of assembly, component of the mcm2-7 complex. The complex forms a toroidal hexameric ring with the proposed subunit order mcm2-mcm6-mcm4-mcm7-mcm3-mcm5. The heterodimers of mcm4/mcm6 and mcm3/mcm5 interact with mcm2 and mcm7.

It is found in the nucleus. The catalysed reaction is ATP + H2O = ADP + phosphate + H(+). Functionally, acts as a component of the mcm2-7 complex (mcm complex) which is the putative replicative helicase essential for 'once per cell cycle' DNA replication initiation and elongation in eukaryotic cells. The active ATPase sites in the mcm2-7 ring are formed through the interaction surfaces of two neighboring subunits such that a critical structure of a conserved arginine finger motif is provided in trans relative to the ATP-binding site of the Walker A box of the adjacent subunit. The six ATPase active sites, however, are likely to contribute differentially to the complex helicase activity. Required for S phase execution. This chain is DNA replication licensing factor mcm4 (mcm4), found in Schizosaccharomyces pombe (strain 972 / ATCC 24843) (Fission yeast).